The chain runs to 239 residues: Small ribosomal subunit protein uS3 (239 aa).

The KH type-2 domain maps to 39–107 (IRAALMKTLK…EVLINIVEVR (69 aa)). Positions 214-239 (AQDKKMAEQDHGGGGGDRRRRDRDAA) are disordered.

This sequence belongs to the universal ribosomal protein uS3 family. As to quaternary structure, part of the 30S ribosomal subunit. Forms a tight complex with proteins S10 and S14.

Functionally, binds the lower part of the 30S subunit head. Binds mRNA in the 70S ribosome, positioning it for translation. The protein is Small ribosomal subunit protein uS3 of Methylocella silvestris (strain DSM 15510 / CIP 108128 / LMG 27833 / NCIMB 13906 / BL2).